Here is a 285-residue protein sequence, read N- to C-terminus: Anamorsin homolog 1 (285 aa).

The tract at residues 1-150 is N-terminal SAM-like domain; the sequence is MEATVLLVTD…QKPTWETGSS (150 aa). The segment at 150–195 is linker; it reads SFSLKKKSVQKQESLPKPGALSVKPEMNVDLEDLIDEESLLSEEDL. Residues Cys-206, Cys-215, Cys-218, and Cys-220 each coordinate [2Fe-2S] cluster. A fe-S binding site A region spans residues 206 to 220; that stretch reads CEVSTKRKACKNCTC. Positions 246, 249, 257, and 260 each coordinate [4Fe-4S] cluster. Short sequence motifs (cx2C motif) lie at residues 246–249 and 257–260; these read CGNC and CSSC. The fe-S binding site B stretch occupies residues 246-260; it reads CGNCGLGDAFRCSSC.

This sequence belongs to the anamorsin family. In terms of assembly, monomer. [2Fe-2S] cluster is required as a cofactor. [4Fe-4S] cluster serves as cofactor.

Its subcellular location is the cytoplasm. It is found in the mitochondrion intermembrane space. Component of the cytosolic iron-sulfur (Fe-S) protein assembly (CIA) machinery. Required for the maturation of extramitochondrial Fe-S proteins. Part of an electron transfer chain functioning in an early step of cytosolic Fe-S biogenesis, facilitating the de novo assembly of a [4Fe-4S] cluster on the cytosolic Fe-S scaffold complex. Electrons are transferred from NADPH via a FAD- and FMN-containing diflavin oxidoreductase. Together with the diflavin oxidoreductase, also required for the assembly of the diferric tyrosyl radical cofactor of ribonucleotide reductase (RNR), probably by providing electrons for reduction during radical cofactor maturation in the catalytic small subunit. The polypeptide is Anamorsin homolog 1 (Picea sitchensis (Sitka spruce)).